The sequence spans 901 residues: HTH-type transcriptional regulator MalT (901 aa).

39 to 46 (SPAGYGKT) contributes to the ATP binding site. Residues 829 to 894 (ELIRTSPLTQ…DAVQHAQQLL (66 aa)) form the HTH luxR-type domain. Residues 853 to 872 (NEQIAGELAVAATTIKTHIR) constitute a DNA-binding region (H-T-H motif).

It belongs to the MalT family. In terms of assembly, monomer in solution. Oligomerizes to an active state in the presence of the positive effectors ATP and maltotriose.

Its activity is regulated as follows. Activated by ATP and maltotriose, which are both required for DNA binding. Positively regulates the transcription of the maltose regulon whose gene products are responsible for uptake and catabolism of malto-oligosaccharides. Specifically binds to the promoter region of its target genes, recognizing a short DNA motif called the MalT box. The polypeptide is HTH-type transcriptional regulator MalT (Enterobacter sp. (strain 638)).